The sequence spans 40 residues: Large ribosomal subunit protein bL36 (40 aa).

This sequence belongs to the bacterial ribosomal protein bL36 family.

The sequence is that of Large ribosomal subunit protein bL36 from Coxiella burnetii (strain Dugway 5J108-111).